Here is a 99-residue protein sequence, read N- to C-terminus: Fetal and adult testis-expressed transcript protein homolog (99 aa).

A helical membrane pass occupies residues 79-98; the sequence is AALFTLLVSVCIANLWLWVH.

In terms of assembly, interacts with BIK and RNF183. Interacts with IMMT/MIC60and EMD.

The protein resides in the mitochondrion. Its subcellular location is the mitochondrion outer membrane. It is found in the endoplasmic reticulum membrane. Functionally, involved in the regulation of endoplasmic reticulum (ER)-mitochondria coupling. Negatively regulates the ER-mitochondria distance and Ca(2+) transfer from ER to mitochondria possibly implicating it in the regulation of apoptosis. May collaborate with RNF183 to restrain BIK protein levels thus regulating apoptotic signaling. This is Fetal and adult testis-expressed transcript protein homolog (Fate1) from Mus musculus (Mouse).